The sequence spans 281 residues: 2,3,4,5-tetrahydropyridine-2,6-dicarboxylate N-succinyltransferase (281 aa).

Substrate contacts are provided by Arg108 and Asp145.

The protein belongs to the transferase hexapeptide repeat family. As to quaternary structure, homotrimer.

Its subcellular location is the cytoplasm. It catalyses the reaction (S)-2,3,4,5-tetrahydrodipicolinate + succinyl-CoA + H2O = (S)-2-succinylamino-6-oxoheptanedioate + CoA. Its pathway is amino-acid biosynthesis; L-lysine biosynthesis via DAP pathway; LL-2,6-diaminopimelate from (S)-tetrahydrodipicolinate (succinylase route): step 1/3. This Nitrobacter winogradskyi (strain ATCC 25391 / DSM 10237 / CIP 104748 / NCIMB 11846 / Nb-255) protein is 2,3,4,5-tetrahydropyridine-2,6-dicarboxylate N-succinyltransferase.